The following is a 462-amino-acid chain: uncharacterized protein (462 aa).

The 69-residue stretch at 22–90 (KPIYKALAGQ…VGSGTFVSYD (69 aa)) folds into the HTH gntR-type domain. The H-T-H motif DNA-binding region spans 50-69 (QRELADYLDLNVSTISKAFK). Lys308 is modified (N6-(pyridoxal phosphate)lysine).

This sequence in the C-terminal section; belongs to the class-I pyridoxal-phosphate-dependent aminotransferase family. Requires pyridoxal 5'-phosphate as cofactor.

This is an uncharacterized protein from Bacillus subtilis (strain 168).